The primary structure comprises 320 residues: Ferrochelatase (320 aa).

2 residues coordinate Fe cation: His194 and Glu275.

It belongs to the ferrochelatase family. Monomer.

It is found in the cytoplasm. The catalysed reaction is heme b + 2 H(+) = protoporphyrin IX + Fe(2+). Its pathway is porphyrin-containing compound metabolism; protoheme biosynthesis; protoheme from protoporphyrin-IX: step 1/1. Its function is as follows. Catalyzes the ferrous insertion into protoporphyrin IX. This chain is Ferrochelatase, found in Escherichia coli O127:H6 (strain E2348/69 / EPEC).